The chain runs to 426 residues: Putative 3-oxoacyl-[acyl-carrier-protein] synthase, mitochondrial (426 aa).

The N-terminal 18 residues, 1–18, are a transit peptide targeting the mitochondrion; the sequence is MKRVVITGLGAVTPLGNG. Positions 19 to 423 constitute a Ketosynthase family 3 (KS3) domain; that stretch reads VKTNWRNLIQ…GTNASLCFKK (405 aa). Active-site for beta-ketoacyl synthase activity residues include C170, H311, and H351.

The protein belongs to the thiolase-like superfamily. Beta-ketoacyl-ACP synthases family.

The protein localises to the mitochondrion. It catalyses the reaction a fatty acyl-[ACP] + malonyl-[ACP] + H(+) = a 3-oxoacyl-[ACP] + holo-[ACP] + CO2. It carries out the reaction butanoyl-[ACP] + malonyl-[ACP] + H(+) = 3-oxohexanoyl-[ACP] + holo-[ACP] + CO2. The enzyme catalyses hexanoyl-[ACP] + malonyl-[ACP] + H(+) = 3-oxooctanoyl-[ACP] + holo-[ACP] + CO2. The catalysed reaction is octanoyl-[ACP] + malonyl-[ACP] + H(+) = 3-oxodecanoyl-[ACP] + holo-[ACP] + CO2. It catalyses the reaction decanoyl-[ACP] + malonyl-[ACP] + H(+) = 3-oxododecanoyl-[ACP] + holo-[ACP] + CO2. It carries out the reaction dodecanoyl-[ACP] + malonyl-[ACP] + H(+) = 3-oxotetradecanoyl-[ACP] + holo-[ACP] + CO2. The enzyme catalyses tetradecanoyl-[ACP] + malonyl-[ACP] + H(+) = 3-oxohexadecanoyl-[ACP] + holo-[ACP] + CO2. It functions in the pathway lipid metabolism; fatty acid biosynthesis. Its function is as follows. May play a role in the biosynthesis of lipoic acid as well as longer chain fatty acids required for optimal mitochondrial function. This Schizosaccharomyces pombe (strain 972 / ATCC 24843) (Fission yeast) protein is Putative 3-oxoacyl-[acyl-carrier-protein] synthase, mitochondrial.